A 157-amino-acid polypeptide reads, in one-letter code: Histidine-containing phosphotransfer protein 5 (157 aa).

An N-acetylmethionine modification is found at Met1. The 108-residue stretch at 41-148 folds into the HPt domain; the sequence is TPDFVAEVVS…NLEKQILQAG (108 aa). His83 carries the phosphohistidine modification.

Interacts with the B-type response regulators ARR1 and ARR2. Binds to AHK2, AHK3, AHK4 and AHK5. Post-translationally, two-component system major event consists of a His-to-Asp phosphorelay between a sensor histidine kinase (HK) and a response regulator (RR). In plants, the His-to-Asp phosphorelay involves an additional intermediate named Histidine-containing phosphotransfer protein (HPt). This multistep phosphorelay consists of a His-Asp-His-Asp sequential transfer of a phosphate group between first a His and an Asp of the HK protein, followed by the transfer to a conserved His of the HPt protein and finally the transfer to an Asp in the receiver domain of the RR protein. As to expression, expressed in the whole plant.

The protein resides in the cytoplasm. It localises to the cytosol. It is found in the nucleus. Functionally, functions as a two-component phosphorelay mediator between cytokinin sensor histidine kinases and response regulators (B-type ARRs). Plays an important role in propagating cytokinin signal transduction through the multistep His-to-Asp phosphorelay. This chain is Histidine-containing phosphotransfer protein 5 (AHP5), found in Arabidopsis thaliana (Mouse-ear cress).